The primary structure comprises 301 residues: Phosphatidylglycerol--prolipoprotein diacylglyceryl transferase (301 aa).

Helical transmembrane passes span I10 to F30, L57 to Y77, V92 to W112, and M119 to G139. Residue R140 participates in a 1,2-diacyl-sn-glycero-3-phospho-(1'-sn-glycerol) binding. 3 consecutive transmembrane segments (helical) span residues P202–F222, Y230–V250, and L264–L284.

Belongs to the Lgt family.

The protein resides in the cell inner membrane. The catalysed reaction is L-cysteinyl-[prolipoprotein] + a 1,2-diacyl-sn-glycero-3-phospho-(1'-sn-glycerol) = an S-1,2-diacyl-sn-glyceryl-L-cysteinyl-[prolipoprotein] + sn-glycerol 1-phosphate + H(+). The protein operates within protein modification; lipoprotein biosynthesis (diacylglyceryl transfer). In terms of biological role, catalyzes the transfer of the diacylglyceryl group from phosphatidylglycerol to the sulfhydryl group of the N-terminal cysteine of a prolipoprotein, the first step in the formation of mature lipoproteins. This is Phosphatidylglycerol--prolipoprotein diacylglyceryl transferase from Xylella fastidiosa (strain M12).